A 387-amino-acid polypeptide reads, in one-letter code: Signal-regulatory protein gamma (387 aa).

The N-terminal stretch at 1-28 is a signal peptide; that stretch reads MPVPASWPHPPGPFLLLTLLLGLTEVAG. The Ig-like V-type domain maps to 29–137; the sequence is EEELQMIQPE…ENVEFKSGPG (109 aa). Topologically, residues 29–360 are extracellular; it reads EEELQMIQPE…QKDQSSDATP (332 aa). 2 disulfide bridges follow: Cys-53-Cys-119 and Cys-168-Cys-226. 2 Ig-like C1-type domains span residues 146–245 and 252–340; these read PSAP…ANLS and PTLE…LAVS. N-linked (GlcNAc...) asparagine glycosylation is found at Asn-243, Asn-268, Asn-309, and Asn-317. Cys-271 and Cys-329 are oxidised to a cystine. A helical membrane pass occupies residues 361–383; it reads GPASSLTALLLIAVLLGPIYVPW. Residues 384-387 are Cytoplasmic-facing; sequence KQKT.

Interacts with CD47. In terms of tissue distribution, detected in liver, and at very low levels in brain, heart, lung, pancreas, kidney, placenta and skeletal muscle. Expressed on CD4+ T-cells, CD8+ T-cells, CD56-bright natural killer (NK) cells, CD20+ cells, and all activated NK cells. Mainly present in the paracortical T-cell area of lymph nodes, with only sparse positive cells in the mantle and in the germinal center of B-cell follicles. In the thymus, primarily expressed in the medulla on mature T-lymphocytes that have undergone thymic selection.

The protein localises to the membrane. In terms of biological role, probable immunoglobulin-like cell surface receptor. On binding with CD47, mediates cell-cell adhesion. Engagement on T-cells by CD47 on antigen-presenting cells results in enhanced antigen-specific T-cell proliferation and costimulates T-cell activation. The protein is Signal-regulatory protein gamma (SIRPG) of Homo sapiens (Human).